The sequence spans 1277 residues: Myosin-1 (1277 aa).

Residues 1–13 are compositionally biased toward basic residues; the sequence is MAPSKKAGKKVTP. A disordered region spans residues 1–27; sequence MAPSKKAGKKVTPKKAAGNNAKSKVAK. A Myosin motor domain is found at 39–718; that stretch reads VGVTDMTLLT…TLFALETMRD (680 aa). 132 to 139 lines the ATP pocket; sequence GESGAGKT. S360 bears the Phosphoserine mark. Residues 407–489 form an actin-binding region; that stretch reads IIGILDIFGF…PGIFAALNDA (83 aa). The interval 567–587 is disordered; it reads LFPDRPDPNSKKRPPTASDRI. IQ domains follow at residues 722-742 and 743-768; these read HNMA…KHEC and ARRI…YGHQ. The region spanning 776-965 is the TH1 domain; sequence RRRFSLLSYR…TVHVPSGEPA (190 aa). Disordered regions lie at residues 952-1072 and 1129-1259; these read YKSH…AEPE and PKAA…GPGQ. Low complexity predominate over residues 1015–1056; sequence PAVATPSVVSTPAAAAVVSKPKPAASTPAAVRAPAVTPAARS. Over residues 1057 to 1068 the composition is skewed to pro residues; that stretch reads VPPPPPPPPPAR. The SH3 domain occupies 1071–1129; sequence PEKEMYRAKFDFQGQEGEMSLTKDDEVELIEKDENGWWLVKKDGVEAWAPYNYLERIAP. A compositionally biased stretch (pro residues) spans 1132 to 1142; sequence APAPPPPPARP. Composition is skewed to polar residues over residues 1145–1159 and 1185–1197; these read TSTV…TTAD and AATT…SSRP. Residues 1204 to 1224 show a composition bias toward pro residues; the sequence is VPPPVAAKPKPPVVAPKPGVP. Positions 1226–1240 are enriched in low complexity; that stretch reads PGGKPALPTTARPAP. The span at 1241–1258 shows a compositional bias: gly residues; it reads SGGGAAAGRLGGGGGGPG.

Belongs to the TRAFAC class myosin-kinesin ATPase superfamily. Myosin family. Phosphorylation of the TEDS site (Ser-360) is required for the polarization of the actin cytoskeleton. Phosphorylation probably activates the myosin-I ATPase activity.

The protein localises to the cytoplasm. It localises to the cytoskeleton. It is found in the actin patch. Type-I myosin implicated in the organization of the actin cytoskeleton. Required for proper actin cytoskeleton polarization. At the cell cortex, assembles in patch-like structures together with proteins from the actin-polymerizing machinery and promotes actin assembly. Functions as actin nucleation-promoting factor (NPF) for the Arp2/3 complex. The chain is Myosin-1 (MYO1) from Coprinopsis cinerea (strain Okayama-7 / 130 / ATCC MYA-4618 / FGSC 9003) (Inky cap fungus).